The following is a 155-amino-acid chain: Ribosomal RNA large subunit methyltransferase H (155 aa).

S-adenosyl-L-methionine is bound by residues Leu-73, Gly-104, and 123–128 (LSPLTL).

It belongs to the RNA methyltransferase RlmH family. In terms of assembly, homodimer.

It is found in the cytoplasm. It carries out the reaction pseudouridine(1915) in 23S rRNA + S-adenosyl-L-methionine = N(3)-methylpseudouridine(1915) in 23S rRNA + S-adenosyl-L-homocysteine + H(+). In terms of biological role, specifically methylates the pseudouridine at position 1915 (m3Psi1915) in 23S rRNA. This chain is Ribosomal RNA large subunit methyltransferase H, found in Pseudomonas fluorescens (strain ATCC BAA-477 / NRRL B-23932 / Pf-5).